A 251-amino-acid polypeptide reads, in one-letter code: Ubiquinone/menaquinone biosynthesis C-methyltransferase UbiE (251 aa).

Residues Thr-74, Asp-95, and Asn-123–Ala-124 each bind S-adenosyl-L-methionine.

The protein belongs to the class I-like SAM-binding methyltransferase superfamily. MenG/UbiE family.

The catalysed reaction is a 2-demethylmenaquinol + S-adenosyl-L-methionine = a menaquinol + S-adenosyl-L-homocysteine + H(+). It carries out the reaction a 2-methoxy-6-(all-trans-polyprenyl)benzene-1,4-diol + S-adenosyl-L-methionine = a 5-methoxy-2-methyl-3-(all-trans-polyprenyl)benzene-1,4-diol + S-adenosyl-L-homocysteine + H(+). It functions in the pathway quinol/quinone metabolism; menaquinone biosynthesis; menaquinol from 1,4-dihydroxy-2-naphthoate: step 2/2. It participates in cofactor biosynthesis; ubiquinone biosynthesis. Its function is as follows. Methyltransferase required for the conversion of demethylmenaquinol (DMKH2) to menaquinol (MKH2) and the conversion of 2-polyprenyl-6-methoxy-1,4-benzoquinol (DDMQH2) to 2-polyprenyl-3-methyl-6-methoxy-1,4-benzoquinol (DMQH2). In Marinomonas sp. (strain MWYL1), this protein is Ubiquinone/menaquinone biosynthesis C-methyltransferase UbiE.